Here is a 227-residue protein sequence, read N- to C-terminus: NAD(P)H-quinone oxidoreductase subunit K, chloroplastic (227 aa).

4 residues coordinate [4Fe-4S] cluster: C43, C44, C108, and C139.

The protein belongs to the complex I 20 kDa subunit family. As to quaternary structure, NDH is composed of at least 16 different subunits, 5 of which are encoded in the nucleus. The cofactor is [4Fe-4S] cluster.

The protein localises to the plastid. It is found in the chloroplast thylakoid membrane. It catalyses the reaction a plastoquinone + NADH + (n+1) H(+)(in) = a plastoquinol + NAD(+) + n H(+)(out). It carries out the reaction a plastoquinone + NADPH + (n+1) H(+)(in) = a plastoquinol + NADP(+) + n H(+)(out). Its function is as follows. NDH shuttles electrons from NAD(P)H:plastoquinone, via FMN and iron-sulfur (Fe-S) centers, to quinones in the photosynthetic chain and possibly in a chloroplast respiratory chain. The immediate electron acceptor for the enzyme in this species is believed to be plastoquinone. Couples the redox reaction to proton translocation, and thus conserves the redox energy in a proton gradient. In Drimys granadensis, this protein is NAD(P)H-quinone oxidoreductase subunit K, chloroplastic.